Reading from the N-terminus, the 298-residue chain is 4-diphosphocytidyl-2-C-methyl-D-erythritol kinase (298 aa).

Residue K25 is part of the active site. 109–119 contributes to the ATP binding site; sequence PVGGGFGGGSS. The active site involves D151.

The protein belongs to the GHMP kinase family. IspE subfamily.

The enzyme catalyses 4-CDP-2-C-methyl-D-erythritol + ATP = 4-CDP-2-C-methyl-D-erythritol 2-phosphate + ADP + H(+). The protein operates within isoprenoid biosynthesis; isopentenyl diphosphate biosynthesis via DXP pathway; isopentenyl diphosphate from 1-deoxy-D-xylulose 5-phosphate: step 3/6. Functionally, catalyzes the phosphorylation of the position 2 hydroxy group of 4-diphosphocytidyl-2C-methyl-D-erythritol. The sequence is that of 4-diphosphocytidyl-2-C-methyl-D-erythritol kinase from Xylella fastidiosa (strain 9a5c).